We begin with the raw amino-acid sequence, 333 residues long: Glycerol-3-phosphate dehydrogenase [NAD(P)+] (333 aa).

3 residues coordinate NADPH: Trp13, Lys33, and Lys108. Sn-glycerol 3-phosphate is bound by residues Lys108 and Gly138. Ser142 is an NADPH binding site. 5 residues coordinate sn-glycerol 3-phosphate: Lys193, Asp246, Ser256, Arg257, and Asn258. Lys193 (proton acceptor) is an active-site residue. Residue Arg257 participates in NADPH binding. The NADPH site is built by Val281 and Glu283.

The protein belongs to the NAD-dependent glycerol-3-phosphate dehydrogenase family.

It is found in the cytoplasm. The enzyme catalyses sn-glycerol 3-phosphate + NAD(+) = dihydroxyacetone phosphate + NADH + H(+). The catalysed reaction is sn-glycerol 3-phosphate + NADP(+) = dihydroxyacetone phosphate + NADPH + H(+). It participates in membrane lipid metabolism; glycerophospholipid metabolism. Functionally, catalyzes the reduction of the glycolytic intermediate dihydroxyacetone phosphate (DHAP) to sn-glycerol 3-phosphate (G3P), the key precursor for phospholipid synthesis. The protein is Glycerol-3-phosphate dehydrogenase [NAD(P)+] of Bifidobacterium longum (strain NCC 2705).